The following is a 333-amino-acid chain: F420-dependent glucose-6-phosphate dehydrogenase (333 aa).

Residue Asp-37 coordinates coenzyme F420-(gamma-Glu)n. The active-site Proton donor is His-38. Residues Thr-74 and 105-106 contribute to the coenzyme F420-(gamma-Glu)n site; that span reads SG. Catalysis depends on Glu-107, which acts as the Proton acceptor. Coenzyme F420-(gamma-Glu)n-binding positions include Asn-110, 174–175, and 177–178; these read GG and VV. Residues Thr-192, Lys-195, Lys-256, and Arg-280 each coordinate substrate.

The protein belongs to the F420-dependent glucose-6-phosphate dehydrogenase family. In terms of assembly, homodimer.

The enzyme catalyses oxidized coenzyme F420-(gamma-L-Glu)(n) + D-glucose 6-phosphate + H(+) = 6-phospho-D-glucono-1,5-lactone + reduced coenzyme F420-(gamma-L-Glu)(n). Catalyzes the coenzyme F420-dependent oxidation of glucose 6-phosphate (G6P) to 6-phosphogluconolactone. This Amycolatopsis mediterranei (strain U-32) protein is F420-dependent glucose-6-phosphate dehydrogenase.